The following is a 1485-amino-acid chain: Dicer-like protein 2 (1485 aa).

A compositionally biased stretch (low complexity) spans 1–11 (MSSQDESASSS). The segment at 1 to 61 (MSSQDESASS…EPQPSGNGPR (61 aa)) is disordered. The Helicase ATP-binding domain maps to 72–250 (MFQASMQQNI…MEDLESSLDS (179 aa)). 85–92 (MDTGSGKT) contacts ATP. The DEAH box motif lies at 193 to 196 (DEAH). The Helicase C-terminal domain maps to 415–579 (KLQVLLRILR…RYENDMRELD (165 aa)). Residues 609–712 (AKGHLEHFCR…LPIRESDFVD (104 aa)) form the Dicer dsRNA-binding fold domain. 2 consecutive RNase III domains span residues 988–1127 (AQEL…IEGG) and 1168–1358 (LGPL…VDSG). Mg(2+) contacts are provided by Glu1208, Asp1344, and Glu1347. The DRBM domain occupies 1388-1469 (HPKEELGRVA…ALEVIRVWEE (82 aa)).

It belongs to the helicase family. Dicer subfamily. The cofactor is Mg(2+). Requires Mn(2+) as cofactor.

In terms of biological role, dicer-like endonuclease involved in cleaving double-stranded RNA in the RNA interference (RNAi) pathway. Produces 21 to 25 bp dsRNAs (siRNAs) which target the selective destruction of homologous RNAs leading to sequence-specific suppression of gene expression, called post-transcriptional gene silencing (PTGS). Part of a broad host defense response against viral infection and transposons. This Pyricularia oryzae (strain 70-15 / ATCC MYA-4617 / FGSC 8958) (Rice blast fungus) protein is Dicer-like protein 2 (DCL2).